Consider the following 425-residue polypeptide: MMNKDITAQSPRSKAVQDALDGKIRGFRGLLPFLGPAFIAAIAYIDPGNFATNISAGSKYGYMLLWVILFSNIMALLIQSLSAKLGIATGKNLPEVAREEFPKPVSIGLWIQGELVIIATDLAEFIGAALGLYLLFGIPMLEASIIAAIGSFAILELQRRGYRSLEAGIAGMLFVVVIAFALQTFFAKPDAVSVMKGLFVPAFHGTDSVLLAAGILGATVMPHAIYLHSALTQRRVVGKTDAERKKIFRFEFIDILIAMLIAGAINASMLIVAAALFFKNGLFVEDLDVAFQQFGHLVSPMSAALFGIGLLVAGLSSSSVGTLSGDVIMQGFINYRIPLYVRRFITIIPPILIIASGVNPTTALVLSQVVLSFGIAFALIPLIMFTSNKRIMGSLINAKWITVVSWLIAVLIVALNVFLIVDTFR.

Transmembrane regions (helical) follow at residues 30–50 (LLPF…PGNF), 61–81 (GYML…IQSL), 107–127 (IGLW…EFIG), 134–154 (LLFG…SFAI), 167–187 (AGIA…TFFA), 209–231 (VLLA…HSAL), 255–275 (ILIA…VAAA), 294–314 (FGHL…LVAG), 344–364 (FITI…TTAL), 365–385 (VLSQ…LIMF), and 401–421 (ITVV…FLIV).

It belongs to the NRAMP family.

It is found in the cell membrane. Functionally, h(+)-stimulated, divalent metal cation uptake system. Involved in manganese uptake. Can probably also transport cadmium, cobalt, copper and zinc, but not iron. May be the predominant transporter of manganese during logarithmic phase growth. This is Divalent metal cation transporter MntH from Bacillus subtilis (strain 168).